The chain runs to 76 residues: Omega-conotoxin-like TxO2 (76 aa).

A signal peptide spans 1–22 (MKLTCVVIVAVLFLTAWTFVTA). Positions 23 to 52 (APHSSNALENLYLKAHHEMNNPEDSELNKR) are excised as a propeptide. Cystine bridges form between cysteine 53/cysteine 67, cysteine 60/cysteine 71, and cysteine 66/cysteine 75.

Belongs to the conotoxin O1 superfamily. Expressed by the venom duct.

It is found in the secreted. In terms of biological role, omega-conotoxins act at presynaptic membranes, they bind and block voltage-gated calcium channels (Cav). The chain is Omega-conotoxin-like TxO2 from Conus textile (Cloth-of-gold cone).